A 171-amino-acid polypeptide reads, in one-letter code: 3-hydroxydecanoyl-[acyl-carrier-protein] dehydratase (171 aa).

Residue H70 is part of the active site.

Belongs to the thioester dehydratase family. FabA subfamily. As to quaternary structure, homodimer.

It is found in the cytoplasm. The catalysed reaction is a (3R)-hydroxyacyl-[ACP] = a (2E)-enoyl-[ACP] + H2O. It catalyses the reaction (3R)-hydroxydecanoyl-[ACP] = (2E)-decenoyl-[ACP] + H2O. It carries out the reaction (2E)-decenoyl-[ACP] = (3Z)-decenoyl-[ACP]. It functions in the pathway lipid metabolism; fatty acid biosynthesis. Functionally, necessary for the introduction of cis unsaturation into fatty acids. Catalyzes the dehydration of (3R)-3-hydroxydecanoyl-ACP to E-(2)-decenoyl-ACP and then its isomerization to Z-(3)-decenoyl-ACP. Can catalyze the dehydratase reaction for beta-hydroxyacyl-ACPs with saturated chain lengths up to 16:0, being most active on intermediate chain length. This Pseudomonas aeruginosa (strain LESB58) protein is 3-hydroxydecanoyl-[acyl-carrier-protein] dehydratase.